A 143-amino-acid chain; its full sequence is Cytochrome c-type biogenesis protein CcmE (143 aa).

At 1-8 the chain is on the cytoplasmic side; sequence MTPVRRRK. The chain crosses the membrane as a helical; Signal-anchor for type II membrane protein span at residues 9 to 29; sequence LFILLFALSVLSAAAALVLYA. At 30-143 the chain is on the periplasmic side; the sequence is LRQNISLFYT…KSALADKVKQ (114 aa). Residues histidine 124 and tyrosine 128 each contribute to the heme site.

The protein belongs to the CcmE/CycJ family.

The protein localises to the cell inner membrane. Heme chaperone required for the biogenesis of c-type cytochromes. Transiently binds heme delivered by CcmC and transfers the heme to apo-cytochromes in a process facilitated by CcmF and CcmH. The polypeptide is Cytochrome c-type biogenesis protein CcmE (Legionella pneumophila).